Here is a 279-residue protein sequence, read N- to C-terminus: Small ribosomal subunit protein uS2 (279 aa).

Residues 232 to 279 (RRRGTDEKPEAGVASDEPLAEWERELLEEPKKSDEPKSDEQPAAAAAE) form a disordered region. Over residues 252 to 271 (EWERELLEEPKKSDEPKSDE) the composition is skewed to basic and acidic residues.

It belongs to the universal ribosomal protein uS2 family.

This chain is Small ribosomal subunit protein uS2, found in Salinispora arenicola (strain CNS-205).